We begin with the raw amino-acid sequence, 209 residues long: Mei4-dependent protein 1 (209 aa).

A signal peptide spans 1 to 22 (MLHATQLCYLLLFCFLPISISS).

The protein localises to the secreted. This is Mei4-dependent protein 1 (mde1) from Schizosaccharomyces pombe (strain 972 / ATCC 24843) (Fission yeast).